Here is a 125-residue protein sequence, read N- to C-terminus: Photosystem I reaction center subunit IV, chloroplastic (125 aa).

The N-terminal 34 residues, 1 to 34, are a transit peptide targeting the chloroplast; it reads MASIASSVAVRLGLTQVLPNKNFSSPRSTRLVVR. Low complexity predominate over residues 42 to 57; it reads APAAASPEGEAPKAAA. The tract at residues 42–68 is disordered; sequence APAAASPEGEAPKAAAKPPPIGPKRGS.

The protein belongs to the PsaE family.

The protein resides in the plastid. The protein localises to the chloroplast thylakoid membrane. In terms of biological role, stabilizes the interaction between PsaC and the PSI core, assists the docking of the ferredoxin to PSI and interacts with ferredoxin-NADP oxidoreductase. In Spinacia oleracea (Spinach), this protein is Photosystem I reaction center subunit IV, chloroplastic (PSAE-1).